The chain runs to 350 residues: Kievitone hydratase (350 aa).

The signal sequence occupies residues 1 to 19 (MMISSVLVAGVVAVSAALA).

In terms of assembly, homodimer. In terms of processing, glycosylated.

The protein localises to the secreted. It carries out the reaction kievitone hydrate = kievitone + H2O. Its function is as follows. Converts fungitoxic kievitone to the less toxic kievitone hydrate, and thereby protects the pathogenic fungus against this phytoalexin. The sequence is that of Kievitone hydratase (khs) from Fusarium solani subsp. phaseoli (Nectria haematococca).